Reading from the N-terminus, the 230-residue chain is Prolactin-3D1 (230 aa).

The N-terminal stretch at 1-29 (MQLTLTLSRASGMQLFLLVSSLLLWEKVA) is a signal peptide. Disulfide bonds link C81/C200 and C217/C225. 2 N-linked (GlcNAc...) asparagine glycosylation sites follow: N109 and N158.

It belongs to the somatotropin/prolactin family.

Its subcellular location is the secreted. The protein is Prolactin-3D1 (Prl3d1) of Rattus norvegicus (Rat).